Here is a 149-residue protein sequence, read N- to C-terminus: Transcriptional repressor NrdR (149 aa).

The segment at 3–34 is a zinc-finger region; the sequence is CPFCSEQETKVIDSRLVAEGQQVRRRRECMVC. The region spanning 49 to 139 is the ATP-cone domain; the sequence is PRVIKRDGSR…VYRSFEDIRE (91 aa).

This sequence belongs to the NrdR family. Zn(2+) is required as a cofactor.

In terms of biological role, negatively regulates transcription of bacterial ribonucleotide reductase nrd genes and operons by binding to NrdR-boxes. This is Transcriptional repressor NrdR from Alteromonas mediterranea (strain DSM 17117 / CIP 110805 / LMG 28347 / Deep ecotype).